The primary structure comprises 32 residues: Dermatoxin-J1 (32 aa).

A Glutamine amide modification is found at Gln-32.

Expressed by the skin glands.

It is found in the secreted. In terms of biological role, antimicrobial peptide. The chain is Dermatoxin-J1 from Phasmahyla jandaia (Jandaia leaf frog).